The sequence spans 264 residues: Methionine aminopeptidase (264 aa).

His79 serves as a coordination point for substrate. The a divalent metal cation site is built by Asp97, Asp108, and His171. His178 lines the substrate pocket. A divalent metal cation-binding residues include Glu204 and Glu235.

It belongs to the peptidase M24A family. Methionine aminopeptidase type 1 subfamily. As to quaternary structure, monomer. It depends on Co(2+) as a cofactor. Zn(2+) is required as a cofactor. Requires Mn(2+) as cofactor. Fe(2+) serves as cofactor.

The catalysed reaction is Release of N-terminal amino acids, preferentially methionine, from peptides and arylamides.. Functionally, removes the N-terminal methionine from nascent proteins. The N-terminal methionine is often cleaved when the second residue in the primary sequence is small and uncharged (Met-Ala-, Cys, Gly, Pro, Ser, Thr, or Val). Requires deformylation of the N(alpha)-formylated initiator methionine before it can be hydrolyzed. The protein is Methionine aminopeptidase of Salmonella typhi.